A 283-amino-acid polypeptide reads, in one-letter code: Bifunctional protein FolD (283 aa).

Residues 163–165 (GRS), Ser-188, and Ile-229 each bind NADP(+).

It belongs to the tetrahydrofolate dehydrogenase/cyclohydrolase family. As to quaternary structure, homodimer.

The catalysed reaction is (6R)-5,10-methylene-5,6,7,8-tetrahydrofolate + NADP(+) = (6R)-5,10-methenyltetrahydrofolate + NADPH. It carries out the reaction (6R)-5,10-methenyltetrahydrofolate + H2O = (6R)-10-formyltetrahydrofolate + H(+). Its pathway is one-carbon metabolism; tetrahydrofolate interconversion. Functionally, catalyzes the oxidation of 5,10-methylenetetrahydrofolate to 5,10-methenyltetrahydrofolate and then the hydrolysis of 5,10-methenyltetrahydrofolate to 10-formyltetrahydrofolate. The chain is Bifunctional protein FolD from Campylobacter fetus subsp. fetus (strain 82-40).